The following is a 205-amino-acid chain: Transcriptional regulator GfcR (205 aa).

Belongs to the purine/pyrimidine phosphoribosyltransferase family. GfcR subfamily.

The chain is Transcriptional regulator GfcR from Methanococcus vannielii (strain ATCC 35089 / DSM 1224 / JCM 13029 / OCM 148 / SB).